A 502-amino-acid polypeptide reads, in one-letter code: UDP-N-acetylmuramoylalanine--D-glutamate ligase (502 aa).

Residue 136–142 (GTNGKTT) participates in ATP binding.

The protein belongs to the MurCDEF family.

It localises to the cytoplasm. It catalyses the reaction UDP-N-acetyl-alpha-D-muramoyl-L-alanine + D-glutamate + ATP = UDP-N-acetyl-alpha-D-muramoyl-L-alanyl-D-glutamate + ADP + phosphate + H(+). It functions in the pathway cell wall biogenesis; peptidoglycan biosynthesis. Functionally, cell wall formation. Catalyzes the addition of glutamate to the nucleotide precursor UDP-N-acetylmuramoyl-L-alanine (UMA). In Corynebacterium jeikeium (strain K411), this protein is UDP-N-acetylmuramoylalanine--D-glutamate ligase.